Consider the following 153-residue polypeptide: Transcriptional repressor NrdR (153 aa).

The segment at Cys3–Cys34 is a zinc-finger region. Residues Leu49 to Asp139 form the ATP-cone domain.

This sequence belongs to the NrdR family. The cofactor is Zn(2+).

Negatively regulates transcription of bacterial ribonucleotide reductase nrd genes and operons by binding to NrdR-boxes. The sequence is that of Transcriptional repressor NrdR from Ehrlichia ruminantium (strain Gardel).